Consider the following 626-residue polypeptide: Two-component response regulator ORR24 (626 aa).

Positions 1–22 are disordered; the sequence is MTVEERQGRVGGHGVSGGGGGR. Gly residues predominate over residues 9–22; that stretch reads RVGGHGVSGGGGGR. In terms of domain architecture, Response regulatory spans 30 to 145; that stretch reads RVLAVDDDPT…QLRTIWQHVI (116 aa). Position 81 is a 4-aspartylphosphate (Asp-81). The span at 151–162 shows a compositional bias: basic and acidic residues; sequence DAKNRGNDDDAG. Disordered regions lie at residues 151 to 215 and 402 to 440; these read DAKN…KKPR and PLES…RTTN. Positions 191 to 202 are enriched in acidic residues; it reads NGDDGDDSDENS. The myb-like GARP DNA-binding region spans 210-269; the sequence is TQKKPRVVWSVELHRKFVAAVNQLGIEKAVPKKILDLMNVENITRENVASHLQKYRLYLK. Residues 402–421 are compositionally biased toward polar residues; sequence PLESSNQQHLSRVHSSSADP.

It belongs to the ARR family. Type-B subfamily. Post-translationally, two-component system major event consists of a His-to-Asp phosphorelay between a sensor histidine kinase (HK) and a response regulator (RR). In plants, the His-to-Asp phosphorelay involves an additional intermediate named Histidine-containing phosphotransfer protein (HPt). This multistep phosphorelay consists of a His-Asp-His-Asp sequential transfer of a phosphate group between first a His and an Asp of the HK protein, followed by the transfer to a conserved His of the HPt protein and finally the transfer to an Asp in the receiver domain of the RR protein.

It is found in the nucleus. Functionally, transcriptional activator that binds specific DNA sequence. Functions as a response regulator involved in His-to-Asp phosphorelay signal transduction system. Phosphorylation of the Asp residue in the receiver domain activates the ability of the protein to promote the transcription of target genes. May directly activate some type-A response regulators in response to cytokinins. The protein is Two-component response regulator ORR24 of Oryza sativa subsp. japonica (Rice).